The following is a 274-amino-acid chain: ATP synthase subunit a (274 aa).

5 helical membrane-spanning segments follow: residues 43 to 63 (TLNIDSLFFSVVLGLAFLFVF), 103 to 123 (VIAPLALTVFVWVLLMNMMDL), 149 to 169 (DVSITLSMALGVFILILFYSI), 223 to 243 (LIFILIAGLLPWWSQWMLSLP), and 245 to 265 (AIFHILIITLQAFIFMVLTIV).

It belongs to the ATPase A chain family. F-type ATPases have 2 components, CF(1) - the catalytic core - and CF(0) - the membrane proton channel. CF(1) has five subunits: alpha(3), beta(3), gamma(1), delta(1), epsilon(1). CF(0) has three main subunits: a(1), b(2) and c(9-12). The alpha and beta chains form an alternating ring which encloses part of the gamma chain. CF(1) is attached to CF(0) by a central stalk formed by the gamma and epsilon chains, while a peripheral stalk is formed by the delta and b chains.

It localises to the cell inner membrane. Key component of the proton channel; it plays a direct role in the translocation of protons across the membrane. The chain is ATP synthase subunit a from Yersinia enterocolitica serotype O:8 / biotype 1B (strain NCTC 13174 / 8081).